Here is a 296-residue protein sequence, read N- to C-terminus: Transposase for insertion sequence element IST2 (296 aa).

This sequence belongs to the transposase mutator family.

In terms of biological role, required for the transposition of the insertion element. The sequence is that of Transposase for insertion sequence element IST2 from Acidithiobacillus ferrooxidans (Thiobacillus ferrooxidans).